A 418-amino-acid polypeptide reads, in one-letter code: Oxalate:formate antiporter (418 aa).

Transmembrane regions (helical) follow at residues 17–37 (WFYL…QYSW), 48–68 (LGVS…IQAG), 84–104 (IPLM…GMVD), 108–128 (ALYA…GIAM), 141–161 (LASG…LPLI), 172–192 (AAFM…AFVI), 222–242 (FWVL…LVAN), 250–270 (LGLA…FNGG), 288–308 (MSVV…IAAL), 311–331 (VAFI…YALF), 350–370 (FFWA…AAIA), and 378–398 (AFLI…FVIP). Lys355 is a binding site for oxalate.

The protein belongs to the major facilitator superfamily. OFA (TC 2.A.1.11) family. In terms of assembly, monomer.

The protein localises to the cell inner membrane. Anion transporter that carries out the exchange of divalent oxalate with monovalent formate, the product of oxalate decarboxylation, at the plasma membrane, and in doing so catalyzes the vectorial portion of a proton-motive metabolic cycle that drives ATP synthesis. The chain is Oxalate:formate antiporter (oxlT) from Oxalobacter formigenes.